A 78-amino-acid chain; its full sequence is Major outer membrane lipoprotein Lpp (78 aa).

The N-terminal stretch at 1-20 is a signal peptide; it reads MKATKLVLGAVILGSTLLAG. Cysteine 21 carries N-palmitoyl cysteine lipidation. The S-diacylglycerol cysteine moiety is linked to residue cysteine 21. Repeats lie at residues 24 to 34 and 38 to 48; these read NAKIDQLSSDV and NAKVDQLSNDV. Residues 27 to 75 adopt a coiled-coil conformation; it reads IDQLSSDVQTLNAKVDQLSNDVNAMRSDVQAAKDDAARANQRLDNMATK. Residue lysine 78 is modified to N6-murein peptidoglycan lysine.

Belongs to the Lpp family. Homotrimer.

It localises to the cell outer membrane. Its subcellular location is the secreted. The protein resides in the cell wall. Its function is as follows. A highly abundant outer membrane lipoprotein that controls the distance between the inner and outer membranes. The only protein known to be covalently linked to the peptidoglycan network (PGN). Also non-covalently binds the PGN. The link between the cell outer membrane and PGN contributes to maintenance of the structural and functional integrity of the cell envelope, and maintains the correct distance between the PGN and the outer membrane. This Shigella flexneri protein is Major outer membrane lipoprotein Lpp.